Reading from the N-terminus, the 383-residue chain is 1-deoxy-D-xylulose 5-phosphate reductoisomerase (383 aa).

The NADPH site is built by threonine 10, glycine 11, serine 12, isoleucine 13, glycine 36, arginine 37, asparagine 38, and asparagine 122. Lysine 123 is a 1-deoxy-D-xylulose 5-phosphate binding site. NADPH is bound at residue glutamate 124. Aspartate 148 is a binding site for Mn(2+). 1-deoxy-D-xylulose 5-phosphate contacts are provided by serine 149, glutamate 150, serine 174, and histidine 197. Residue glutamate 150 coordinates Mn(2+). Glycine 203 is a binding site for NADPH. 1-deoxy-D-xylulose 5-phosphate contacts are provided by serine 210, asparagine 215, lysine 216, and glutamate 219. Glutamate 219 contacts Mn(2+).

The protein belongs to the DXR family. Mg(2+) is required as a cofactor. Requires Mn(2+) as cofactor.

The enzyme catalyses 2-C-methyl-D-erythritol 4-phosphate + NADP(+) = 1-deoxy-D-xylulose 5-phosphate + NADPH + H(+). It participates in isoprenoid biosynthesis; isopentenyl diphosphate biosynthesis via DXP pathway; isopentenyl diphosphate from 1-deoxy-D-xylulose 5-phosphate: step 1/6. Its function is as follows. Catalyzes the NADPH-dependent rearrangement and reduction of 1-deoxy-D-xylulose-5-phosphate (DXP) to 2-C-methyl-D-erythritol 4-phosphate (MEP). This chain is 1-deoxy-D-xylulose 5-phosphate reductoisomerase, found in Bacillus pumilus (strain SAFR-032).